Here is a 479-residue protein sequence, read N- to C-terminus: Ribosomal RNA small subunit methyltransferase F (479 aa).

Residues 125–131 (AAAPGSK), Glu-149, Asp-176, and Asp-194 each bind S-adenosyl-L-methionine. Cys-247 functions as the Nucleophile in the catalytic mechanism.

This sequence belongs to the class I-like SAM-binding methyltransferase superfamily. RsmB/NOP family.

Its subcellular location is the cytoplasm. It catalyses the reaction cytidine(1407) in 16S rRNA + S-adenosyl-L-methionine = 5-methylcytidine(1407) in 16S rRNA + S-adenosyl-L-homocysteine + H(+). Specifically methylates the cytosine at position 1407 (m5C1407) of 16S rRNA. In Escherichia coli O6:H1 (strain CFT073 / ATCC 700928 / UPEC), this protein is Ribosomal RNA small subunit methyltransferase F.